The primary structure comprises 1121 residues: Putative ATP-dependent RNA helicase ECM32 (1121 aa).

The interval Asn157–Lys187 is disordered. Residues Arg160–Lys184 are compositionally biased toward basic residues. Position 227 is a phosphoserine (Ser227). The interval Ala233–Lys452 is disordered. Residues Asn251–Asn263 show a composition bias toward basic residues. Residues Ile278–Pro287 are compositionally biased toward polar residues. Over residues Gly307 to Gln316 the composition is skewed to basic and acidic residues. The segment covering Leu323–Leu336 has biased composition (low complexity). The segment covering Asp342–Lys363 has biased composition (basic and acidic residues). Residues Lys376–Lys413 show a composition bias toward polar residues. A Phosphoserine modification is found at Ser392. Positions Leu426–Lys452 are enriched in basic and acidic residues. Phosphothreonine is present on Thr465. Gly670–Thr677 contributes to the ATP binding site.

This sequence belongs to the DNA2/NAM7 helicase family. As to quaternary structure, interacts with the peptidyl release factors SUP35 and weakly with SUP45.

Its subcellular location is the cytoplasm. It catalyses the reaction ATP + H2O = ADP + phosphate + H(+). In terms of biological role, probable RNA helicase, which may be involved in modulation of the translation termination process. Probably unwinds double-stranded RNA. In vitro, unwinds covalently closed, circular DNA in the presence of a DNA topoisomerase TOP1 and replication factor-A protein RFA1. The protein is Putative ATP-dependent RNA helicase ECM32 (ECM32) of Saccharomyces cerevisiae (strain ATCC 204508 / S288c) (Baker's yeast).